A 140-amino-acid chain; its full sequence is Large ribosomal subunit protein uL11 (140 aa).

Belongs to the universal ribosomal protein uL11 family. As to quaternary structure, part of the ribosomal stalk of the 50S ribosomal subunit. Interacts with L10 and the large rRNA to form the base of the stalk. L10 forms an elongated spine to which L12 dimers bind in a sequential fashion forming a multimeric L10(L12)X complex. Post-translationally, one or more lysine residues are methylated.

In terms of biological role, forms part of the ribosomal stalk which helps the ribosome interact with GTP-bound translation factors. In Thermoanaerobacter pseudethanolicus (strain ATCC 33223 / 39E) (Clostridium thermohydrosulfuricum), this protein is Large ribosomal subunit protein uL11.